The chain runs to 842 residues: Unconventional myosin-Ia (842 aa).

The region spanning 1 to 686 (GVEDLILLEP…TLFYLEEQRR (686 aa)) is the Myosin motor domain. Residue 93 to 100 (GESGAGKT) coordinates ATP. The actin-binding stretch occupies residues 563 to 585 (VAILMKNLYSKNPNYIRCIKPND). IQ domains lie at 689–712 (LQQLATLIQKVYRGWRCRTHYQQM), 713–733 (RKSQILLSAWFRGNKQKKHYG), and 735–764 (IRSSVLLIQAFVRGWKARKNYRKYFRSGAR).

Belongs to the TRAFAC class myosin-kinesin ATPase superfamily. Myosin family. Phosphorylated by ALPK1.

Involved in directing the movement of organelles along actin filaments. The protein is Unconventional myosin-Ia (Myo1a) of Rattus norvegicus (Rat).